Consider the following 391-residue polypeptide: Transmembrane protein 79 (391 aa).

A disordered region spans residues 1 to 114; the sequence is MTEPETLALL…TKSEEPFKED (114 aa). The Cytoplasmic portion of the chain corresponds to 1–200; that stretch reads MTEPETLALL…GREALRAVAS (200 aa). Residues 103 to 114 are compositionally biased toward basic and acidic residues; sequence APTKSEEPFKED. Residues 201–221 form a helical membrane-spanning segment; sequence VVAALIFFPCLLYGAYAFLPF. The Extracellular portion of the chain corresponds to 222–240; the sequence is DAPRLPTMSSRLVYTLRCG. Residues 241-261 traverse the membrane as a helical segment; sequence VFATFPIVLGLLVYGLSLLCF. The Cytoplasmic portion of the chain corresponds to 262–279; it reads SALRPFGEPRREVEIHRQ. The chain crosses the membrane as a helical span at residues 280-300; it reads YVAQSVQLFILYFFNLAVLST. The Extracellular segment spans residues 301–309; the sequence is YLPQDTLKL. Residues 310–330 traverse the membrane as a helical segment; sequence LPLLTGLFAISRLIYWLTFAV. Over 331-339 the chain is Cytoplasmic; it reads GRSFRGFGY. A helical membrane pass occupies residues 340–360; the sequence is GLTFLPLLAMLVWNLYYMFVV. Topologically, residues 361–391 are extracellular; sequence EPERMLTASESRLDYPDHARSVSDYRPRSWG.

As to expression, expressed in the epidermis of the skin. Expressed in epithelial cells of the outermost layer of the stratum granulosum (SG) and in hair follicles (at protein level).

Its subcellular location is the lysosome. The protein localises to the golgi apparatus. The protein resides in the trans-Golgi network. It is found in the membrane. In terms of biological role, contributes to the epidermal integrity and skin barrier function. Plays a role in the lamellar granule (LG) secretory system and in the stratum corneum (SC) epithelial cell formation. This chain is Transmembrane protein 79 (Tmem79), found in Mus musculus (Mouse).